The chain runs to 259 residues: Proliferating cell nuclear antigen (259 aa).

The DNA-binding element occupies 61–80; that stretch reads RCDRNIALGVNLTSLTKVLR. K164 is covalently cross-linked (Glycyl lysine isopeptide (Lys-Gly) (interchain with G-Cter in SUMO); alternate). A Glycyl lysine isopeptide (Lys-Gly) (interchain with G-Cter in ubiquitin); alternate cross-link involves residue K164.

This sequence belongs to the PCNA family. In terms of assembly, homotrimer. In terms of processing, monoubiquitinated on Lys-164 upon DNA damage, and then polyubiquitinated through 'Lys-63'-linkage.

It is found in the nucleus. In terms of biological role, this protein is an auxiliary protein of DNA polymerase delta and is involved in the control of eukaryotic DNA replication by increasing the polymerase's processibility during elongation of the leading strand. Involved in DNA repair. This Chaetomium thermophilum (strain DSM 1495 / CBS 144.50 / IMI 039719) (Thermochaetoides thermophila) protein is Proliferating cell nuclear antigen.